We begin with the raw amino-acid sequence, 325 residues long: Beta-ketoacyl-[acyl-carrier-protein] synthase III (325 aa).

Active-site residues include C119 and H252. The tract at residues 253–257 (QANIR) is ACP-binding. Residue N282 is part of the active site.

The protein belongs to the thiolase-like superfamily. FabH family. As to quaternary structure, homodimer.

It is found in the cytoplasm. The enzyme catalyses malonyl-[ACP] + acetyl-CoA + H(+) = 3-oxobutanoyl-[ACP] + CO2 + CoA. It functions in the pathway lipid metabolism; fatty acid biosynthesis. Functionally, catalyzes the condensation reaction of fatty acid synthesis by the addition to an acyl acceptor of two carbons from malonyl-ACP. Catalyzes the first condensation reaction which initiates fatty acid synthesis and may therefore play a role in governing the total rate of fatty acid production. Possesses both acetoacetyl-ACP synthase and acetyl transacylase activities. Its substrate specificity determines the biosynthesis of branched-chain and/or straight-chain of fatty acids. The polypeptide is Beta-ketoacyl-[acyl-carrier-protein] synthase III (Polaromonas sp. (strain JS666 / ATCC BAA-500)).